Reading from the N-terminus, the 757-residue chain is Xaa-Pro dipeptidyl-peptidase (757 aa).

Catalysis depends on charge relay system residues S348, D468, and H498.

The protein belongs to the peptidase S15 family. Homodimer.

Its subcellular location is the cytoplasm. The enzyme catalyses Hydrolyzes Xaa-Pro-|- bonds to release unblocked, N-terminal dipeptides from substrates including Ala-Pro-|-p-nitroanilide and (sequentially) Tyr-Pro-|-Phe-Pro-|-Gly-Pro-|-Ile.. Removes N-terminal dipeptides sequentially from polypeptides having unsubstituted N-termini provided that the penultimate residue is proline. The protein is Xaa-Pro dipeptidyl-peptidase of Streptococcus pneumoniae (strain Hungary19A-6).